We begin with the raw amino-acid sequence, 417 residues long: Odorant receptor 65a (417 aa).

Topologically, residues 1 to 62 (MTELRSERKN…MNSEQRRLPR (62 aa)) are cytoplasmic. Residues 63-83 (IVAWQYFVSIQLATALASLFY) form a helical membrane-spanning segment. Residues 84–98 (GISESIGDIVNLGRD) lie on the Extracellular side of the membrane. A helical membrane pass occupies residues 99-119 (LVFIITIIFICFRLVFFAQYA). Residues 120 to 152 (GELDVIIDALEDIYHWSIKGPATKEVQETKRLH) lie on the Cytoplasmic side of the membrane. A helical membrane pass occupies residues 153 to 173 (FLLFMALIITWFSFLILFMLI). At 174–206 (KISTPFWIESQTLPFHVSWPFQLHDPSKHPIAY) the chain is on the extracellular side. A helical membrane pass occupies residues 207–227 (IIIFVSQSTTMLYFLIWLGVV). Residues 228-290 (ENMGVSLFFE…TDRCNHIFNG (63 aa)) lie on the Cytoplasmic side of the membrane. Residues 291 to 311 (AFIMQMLINFLLVSLSLFEVL) traverse the membrane as a helical segment. Residues 312-316 (AAKKN) lie on the Extracellular side of the membrane. A helical membrane pass occupies residues 317-337 (PQVAVEYMIIMLMTLGHLSFW). Residues 338–393 (SKFGDMFSKESEQVALAVYEAYDPNVGSKSIHRQFCFFIQRAQKPLIMKASPFPPF) lie on the Cytoplasmic side of the membrane. The helical transmembrane segment at 394–414 (NLENYMFILKQCYSILTILAN) threads the bilayer. Topologically, residues 415 to 417 (TLE) are extracellular.

This sequence belongs to the insect chemoreceptor superfamily. Heteromeric odorant receptor channel (TC 1.A.69) family. Or49a subfamily. In terms of assembly, interacts with Orco. Complexes exist early in the endomembrane system in olfactory sensory neurons (OSNs), coupling these complexes to the conserved ciliary trafficking pathway. Expressed in olfactory sensory neurons in the antenna.

It is found in the cell membrane. Its function is as follows. Odorant receptor which mediates acceptance or avoidance behavior, depending on its substrates. The odorant receptor repertoire encodes a large collection of odor stimuli that vary widely in identity, intensity, and duration. May form a complex with Orco to form odorant-sensing units, providing sensitive and prolonged odorant signaling and calcium permeability. Involved in olfactory communication for modulating aggression through the sensing of the male-specific pheromone 11-cis-vaccenyl acetate (cVA). Although acute exposure to cVA elicites aggression through Or67d olfactory receptor neurons (ORNs), chronic cVA exposure reduces aggression through Or65a ORNs. Moreover, cVA leads to generalized learning with mated females. It is a major component of the male cuticular hydrocarbon profile, but it is not found on virgin females. During copulation, cVA is transferred to the female in ejaculate along with sperm and peptides that decrease her sexual receptivity. The protein is Odorant receptor 65a (Or65a) of Drosophila melanogaster (Fruit fly).